Reading from the N-terminus, the 303-residue chain is MDSSHVTESQGTLLFNEPLAEYTTWRVGGPAARLYKPANIDDLALFLSRLPFDEPLLWLGLGSNSLIRDGGFSGTVILTQGCLKEMTLLSDNCIRVEAGVSCASMARFSARNNLSEGEFWAGIPGTMGGALRMNAGCHGGETWQSVIEVQTINRRGEIRTRKPEEFEVAYRHVAGLGDEWFISAKLQLTPGNKETSLQLIKDLLAHRAKTQPTNEYNCGSVFRNPPGDFAARLIESCGLKGVSIGGAVVSEKHANFIINHQGTATAANIEALIHLVQTKVREQTSIELIREVHIIGDANVQTR.

The 165-residue stretch at 27-191 (VGGPAARLYK…ISAKLQLTPG (165 aa)) folds into the FAD-binding PCMH-type domain. Arg-171 is an active-site residue. The Proton donor role is filled by Ser-220. The active site involves Glu-291.

The protein belongs to the MurB family. FAD is required as a cofactor.

It localises to the cytoplasm. It carries out the reaction UDP-N-acetyl-alpha-D-muramate + NADP(+) = UDP-N-acetyl-3-O-(1-carboxyvinyl)-alpha-D-glucosamine + NADPH + H(+). It participates in cell wall biogenesis; peptidoglycan biosynthesis. In terms of biological role, cell wall formation. The protein is UDP-N-acetylenolpyruvoylglucosamine reductase of Legionella pneumophila (strain Paris).